The chain runs to 147 residues: HTH-type transcriptional regulator HmrR (147 aa).

The 69-residue stretch at M1 to L69 folds into the HTH merR-type domain. The segment at residues G4–I23 is a DNA-binding region (H-T-H motif).

As to quaternary structure, homodimer.

Its subcellular location is the cytoplasm. Functionally, regulates the transcription of actP. It detects cytoplasmic copper stress and activates transcription in response to increasing copper concentrations. In the absence of copper, it negatively regulates the transcription of actP. This Sinorhizobium medicae (strain WSM419) (Ensifer medicae) protein is HTH-type transcriptional regulator HmrR (hmrR).